Reading from the N-terminus, the 563-residue chain is NAD-dependent malic enzyme (563 aa).

Y101 functions as the Proton donor in the catalytic mechanism. Residue R154 coordinates NAD(+). K172 serves as the catalytic Proton acceptor. A divalent metal cation contacts are provided by E243, D244, and D267. NAD(+) contacts are provided by D267 and N416.

Belongs to the malic enzymes family. Homotetramer. Mg(2+) serves as cofactor. It depends on Mn(2+) as a cofactor.

It catalyses the reaction (S)-malate + NAD(+) = pyruvate + CO2 + NADH. The catalysed reaction is oxaloacetate + H(+) = pyruvate + CO2. The sequence is that of NAD-dependent malic enzyme from Pseudomonas syringae pv. syringae (strain B728a).